The primary structure comprises 324 residues: Ribose 1,5-bisphosphate isomerase (324 aa).

Substrate contacts are provided by residues 22–25 (RGAG) and arginine 65. Residue cysteine 135 is the Proton acceptor of the active site. Residue 137-139 (SKA) coordinates substrate. The active-site Proton donor is the aspartate 204. Lysine 240 provides a ligand contact to substrate.

The protein belongs to the eIF-2B alpha/beta/delta subunits family. R15P isomerase subfamily.

It carries out the reaction alpha-D-ribose 1,5-bisphosphate = D-ribulose 1,5-bisphosphate. Its function is as follows. Catalyzes the isomerization of ribose 1,5-bisphosphate (R15P) to ribulose 1,5-bisphosphate (RuBP), the CO(2) acceptor and substrate for RubisCO. Functions in an archaeal AMP degradation pathway, together with AMP phosphorylase and RubisCO. This is Ribose 1,5-bisphosphate isomerase from Pyrococcus furiosus (strain ATCC 43587 / DSM 3638 / JCM 8422 / Vc1).